The primary structure comprises 993 residues: Synaptonemal complex protein 1 (993 aa).

The Mediates head to head self-assembly of N-terminal ends motif lies at 98–108 (PMSRLYSKLYK). Residues 114 to 117 (KKWK) carry the Nuclear localization signal motif. Coiled coils occupy residues 117–172 (KVSI…LIKE) and 215–688 (IEKM…EIEN). The interaction with SYCE3 stretch occupies residues 203–359 (ETRQVYVDLN…SQLTEVKEAQ (157 aa)). The required for pH-induced assembly of C-terminal ends into antiparallel tetramers stretch occupies residues 694–788 (GKLLGEVEKA…VSLKKQLEIE (95 aa)). The Nuclear localization signal motif lies at 697–700 (LGEV). Residues 764 to 808 (KIALETELSNIRNELVSLKKQLEIEKEEKEKLKMAKENTAILKDK) adopt a coiled-coil conformation. Residues 801 to 993 (NTAILKDKKD…RLKEAEKLFS (193 aa)) form a DNA-binding region. Phosphoserine is present on Ser-820. The tract at residues 824–861 (TSWKFDSKTTPSQNISRLSSSMDSGKSKDNRDNLRASA) is disordered. Polar residues predominate over residues 831 to 847 (KTTPSQNISRLSSSMDS). Residues 848–857 (GKSKDNRDNL) show a composition bias toward basic and acidic residues. The Nuclear localization signal signature appears at 898 to 901 (KKRK).

Structural component of synaptonemal complexes. Homotetramer that consists of an N-terminal four-helical bundle that bifurcates into two elongated C-terminal dimeric coiled coils. This tetrameric building block potentially self-assembles into a supramolecular zipper-like lattice to mediate meiotic chromosome synapsis. Self-assembly is likely initiated by local proton density at chromosome axis, which is predicted to trigger antiparallel back to back assembly of adjacent C-terminal ends into tetrameric structures that anchor to chromosomal DNA. Then the N-terminal ends are predicted to undergo cooperative antiparallel head to head assembly at the midline of synaptonemal complexes central element to form a zipper-like lattice between properly aligned homologous chromosomes. The nascent synapsis generated by SYCP1 is stabilized through interaction with central element proteins SYCE1 and SYCE2. Interacts (via tetrameric core) with SYCE3; the interaction remodels SYCP1 homotetramers to 2:1 heterotrimers with SYCE3. SYCP1/SYCE3 heterotrimers form lattice assemblies as part of the mature synaptonemal complex via both lateral and head-to-head interactions. Forms a complex with EWSR1, PRDM9, SYCP3 and REC8; complex formation is dependent of phosphorylated form of REC8 and requires PRDM9 bound to hotspot DNA; EWSR1 joins PRDM9 with the chromosomal axis through REC8. Interacts with SPO16. Detected in testis. Detected in spermatocytes (at protein level).

Its subcellular location is the nucleus. It is found in the chromosome. It localises to the centromere. Functionally, major component of the transverse filaments of synaptonemal complexes, formed between homologous chromosomes during meiotic prophase. Required for normal assembly of the central element of the synaptonemal complexes. Required for normal centromere pairing during meiosis. Required for normal meiotic chromosome synapsis during oocyte and spermatocyte development and for normal male and female fertility. This is Synaptonemal complex protein 1 from Mus musculus (Mouse).